A 196-amino-acid chain; its full sequence is Imidazoleglycerol-phosphate dehydratase (196 aa).

Belongs to the imidazoleglycerol-phosphate dehydratase family.

Its subcellular location is the cytoplasm. The enzyme catalyses D-erythro-1-(imidazol-4-yl)glycerol 3-phosphate = 3-(imidazol-4-yl)-2-oxopropyl phosphate + H2O. It functions in the pathway amino-acid biosynthesis; L-histidine biosynthesis; L-histidine from 5-phospho-alpha-D-ribose 1-diphosphate: step 6/9. The chain is Imidazoleglycerol-phosphate dehydratase from Desulforudis audaxviator (strain MP104C).